Here is a 323-residue protein sequence, read N- to C-terminus: Zinc finger C2HC domain-containing protein 1A (323 aa).

A C2HC/C3H-type 1 zinc finger spans residues 14–43; the sequence is ELLPCKICGRTFFPVALKKHGPICQKTATK. Residues Cys-18, Cys-21, His-33, and Cys-37 each contribute to the Zn(2+) site. The disordered stretch occupies residues 42–81; sequence TKKRKTFDSSRQRAEGTDIPTVKPLKPRPEPPKKPSNWRR. The segment covering 47–57 has biased composition (basic and acidic residues); that stretch reads TFDSSRQRAEG. The C2HC/C3H-type 2 zinc-finger motif lies at 117–146; it reads DYIQCPYCQRRFNENAADRHINFCKEQAAR. The Zn(2+) site is built by Cys-121, Cys-124, His-136, and Cys-140. The tract at residues 149-258 is disordered; the sequence is NKGKFSTDTK…NPASGVLTSK (110 aa). The segment covering 177–197 has biased composition (polar residues); the sequence is SPGTTSSGSSRLPQPSGTSKT. Residues 198–214 show a composition bias toward low complexity; it reads VVGAPSGKVSSVSSSSG. Position 221 is a phosphoserine (Ser-221). A Phosphothreonine modification is found at Thr-242. Residue Ser-290 is modified to Phosphoserine.

Belongs to the ZC2HC1 family. The cofactor is Zn(2+).

The chain is Zinc finger C2HC domain-containing protein 1A (ZC2HC1A) from Bos taurus (Bovine).